Consider the following 471-residue polypeptide: Glutamate--tRNA ligase (471 aa).

A 'HIGH' region motif is present at residues 10 to 20 (PSPTGYLHIGG). Zn(2+) contacts are provided by Cys107, Cys109, Cys134, and Glu136. The 'KMSKS' region motif lies at 244 to 248 (RLSKR). Lys247 is an ATP binding site.

The protein belongs to the class-I aminoacyl-tRNA synthetase family. Glutamate--tRNA ligase type 1 subfamily. As to quaternary structure, monomer. The cofactor is Zn(2+).

The protein resides in the cytoplasm. The catalysed reaction is tRNA(Glu) + L-glutamate + ATP = L-glutamyl-tRNA(Glu) + AMP + diphosphate. Functionally, catalyzes the attachment of glutamate to tRNA(Glu) in a two-step reaction: glutamate is first activated by ATP to form Glu-AMP and then transferred to the acceptor end of tRNA(Glu). This is Glutamate--tRNA ligase from Anaeromyxobacter sp. (strain Fw109-5).